A 610-amino-acid chain; its full sequence is Glutamine--fructose-6-phosphate aminotransferase [isomerizing] (610 aa).

C2 functions as the Nucleophile; for GATase activity in the catalytic mechanism. The Glutamine amidotransferase type-2 domain occupies 2–220 (CGIISAISKK…EGDIAILSHK (219 aa)). SIS domains lie at 289–429 (AHAL…LKTN) and 461–600 (LAKE…IDKP). K605 functions as the For Fru-6P isomerization activity in the catalytic mechanism.

In terms of assembly, homodimer.

It is found in the cytoplasm. The catalysed reaction is D-fructose 6-phosphate + L-glutamine = D-glucosamine 6-phosphate + L-glutamate. In terms of biological role, catalyzes the first step in hexosamine metabolism, converting fructose-6P into glucosamine-6P using glutamine as a nitrogen source. This is Glutamine--fructose-6-phosphate aminotransferase [isomerizing] from Buchnera aphidicola subsp. Baizongia pistaciae (strain Bp).